The following is a 260-amino-acid chain: MHRMEQRLEIEQFICRSDNYGVLIHDPESALTATIDAPDAYAIEAALERRGWTLDFIFTTHHHLDHVEGNEPLKEKFGVSIIGPEAEKAKIPGIDRTVKGGDEFTFGLFKVKVISTPGHTAGGISYYLPDAKVVFTGDTLFALGCGRLFEGTPATMFHSLEKLVALPGDTALYCGHEYTQNNARFALTIDPDNSALKERAKEIARLRAHERMTLPSTIALEMATNPFLRWHDRTIRARLGLQDAPDEAVFAEIRKRKDMF.

Zn(2+) contacts are provided by histidine 61, histidine 63, aspartate 65, histidine 66, histidine 119, aspartate 138, and histidine 176.

This sequence belongs to the metallo-beta-lactamase superfamily. Glyoxalase II family. As to quaternary structure, monomer. It depends on Zn(2+) as a cofactor.

It carries out the reaction an S-(2-hydroxyacyl)glutathione + H2O = a 2-hydroxy carboxylate + glutathione + H(+). Its pathway is secondary metabolite metabolism; methylglyoxal degradation; (R)-lactate from methylglyoxal: step 2/2. In terms of biological role, thiolesterase that catalyzes the hydrolysis of S-D-lactoyl-glutathione to form glutathione and D-lactic acid. The polypeptide is Hydroxyacylglutathione hydrolase (Brucella suis (strain ATCC 23445 / NCTC 10510)).